The sequence spans 256 residues: DNA repair protein RecO (256 aa).

The protein belongs to the RecO family.

Involved in DNA repair and RecF pathway recombination. This Rhizobium etli (strain ATCC 51251 / DSM 11541 / JCM 21823 / NBRC 15573 / CFN 42) protein is DNA repair protein RecO.